The primary structure comprises 553 residues: Chaperonin GroEL 1 (553 aa).

ATP contacts are provided by residues 29 to 32 (TIGP), 86 to 90 (DGTTT), Gly413, 476 to 478 (NAL), and Asp492. Residues 520–543 (DKPEPPAPAGGGGDPMGGMGGMDP) form a disordered region. Over residues 528–543 (AGGGGDPMGGMGGMDP) the composition is skewed to gly residues.

It belongs to the chaperonin (HSP60) family. Forms a cylinder of 14 subunits composed of two heptameric rings stacked back-to-back. Interacts with the co-chaperonin GroES.

It localises to the cytoplasm. The enzyme catalyses ATP + H2O + a folded polypeptide = ADP + phosphate + an unfolded polypeptide.. In terms of biological role, together with its co-chaperonin GroES, plays an essential role in assisting protein folding. The GroEL-GroES system forms a nano-cage that allows encapsulation of the non-native substrate proteins and provides a physical environment optimized to promote and accelerate protein folding. This is Chaperonin GroEL 1 from Synechococcus sp. (strain CC9311).